Reading from the N-terminus, the 432-residue chain is Pachytene checkpoint protein 2 homolog (432 aa).

Met1 carries the post-translational modification N-acetylmethionine. 179–186 (GPPGTGKT) serves as a coordination point for ATP.

It belongs to the AAA ATPase family. PCH2 subfamily. Specifically interacts with the ligand binding domain of the thyroid receptor (TR). This interaction does not require the presence of thyroid hormone for its interaction. Interacts with proteasome subunit PSMA8; to participate in meiosis progression during spermatogenesis.

Functionally, plays a key role in chromosome recombination and chromosome structure development during meiosis. Required at early steps in meiotic recombination that leads to non-crossovers pathways. Also needed for efficient completion of homologous synapsis by influencing crossover distribution along the chromosomes affecting both crossovers and non-crossovers pathways. Also required for development of higher-order chromosome structures and is needed for synaptonemal-complex formation. In males, required for efficient synapsis of the sex chromosomes and for sex body formation. Promotes early steps of the DNA double-strand breaks (DSBs) repair process upstream of the assembly of RAD51 complexes. Required for depletion of HORMAD1 and HORMAD2 from synapsed chromosomes. Plays a role in mitotic spindle assembly checkpoint (SAC) activation. The polypeptide is Pachytene checkpoint protein 2 homolog (Trip13) (Rattus norvegicus (Rat)).